The chain runs to 157 residues: Ribosome maturation factor RimP (157 aa).

Belongs to the RimP family.

The protein localises to the cytoplasm. Required for maturation of 30S ribosomal subunits. The polypeptide is Ribosome maturation factor RimP (Enterococcus faecalis (strain ATCC 700802 / V583)).